A 249-amino-acid polypeptide reads, in one-letter code: MTATACYGIIPARYDSSRFPGKPLADIQGRPMFWHVWHRASLCPQLQQVVLATDDGRIAEAAHALDVPYVMTRSDHPSGTDRVFEAATLLQLDEDAVVVNIQGDEPALEPRMLSELVRPFAEDAAVQVTTLARAISPQQAACPDVVKVVCTAGGDALYFSRAAIPYCRDGQSGAPCMGHVGLYAFRYQALRRFTQLEQSVLERTEKLEQLRLLENNIPIRVVETAYRTHGVDRPGDIDVIINMIRENEG.

The protein belongs to the KdsB family.

Its subcellular location is the cytoplasm. It catalyses the reaction 3-deoxy-alpha-D-manno-oct-2-ulosonate + CTP = CMP-3-deoxy-beta-D-manno-octulosonate + diphosphate. It functions in the pathway nucleotide-sugar biosynthesis; CMP-3-deoxy-D-manno-octulosonate biosynthesis; CMP-3-deoxy-D-manno-octulosonate from 3-deoxy-D-manno-octulosonate and CTP: step 1/1. It participates in bacterial outer membrane biogenesis; lipopolysaccharide biosynthesis. Functionally, activates KDO (a required 8-carbon sugar) for incorporation into bacterial lipopolysaccharide in Gram-negative bacteria. This is 3-deoxy-manno-octulosonate cytidylyltransferase from Oleidesulfovibrio alaskensis (strain ATCC BAA-1058 / DSM 17464 / G20) (Desulfovibrio alaskensis).